A 417-amino-acid polypeptide reads, in one-letter code: MTLHTLDELLADGVQGRYVLVRSDLNVPLSGAEDTNLTVTDDGRIRASLPVIEKLAAAGARVLVLAHLGRPKGAPEAKYSLRPAADRLAELASVPVSLAADTSGESAQKAAAELADGQVLVLENVRFDPRETSKDDAERAAFAAELAELAASGADKEAAYVDDAFGAVHRKHASVFDLALKLPSFHGDLVRTELDVLRKLTDSPERPYVVVLGGSKVSDKLAVIENLIGKADSILVGGGMLFTFLAAQGHEVGASLLESDQIDTVKDYLARAEAAGTSFVLPTDVVVASKFAADAAHELVAAQAIESSSFGAAGIGLDIGPETSQAFAEQISAAKTVFWNGPMGVFEFAAFASGTRAVAQALADSAAFSVVGGGDSAAAVRTLGFADNAFGHISTGGGASLEFLEGKELPGLTALDR.

Substrate contacts are provided by residues 24 to 26 (DLN), R44, 67 to 70 (HLGR), R126, and R170. ATP contacts are provided by residues K220, G316, E347, and 373-376 (GGDS).

The protein belongs to the phosphoglycerate kinase family. As to quaternary structure, monomer.

It is found in the cytoplasm. The catalysed reaction is (2R)-3-phosphoglycerate + ATP = (2R)-3-phospho-glyceroyl phosphate + ADP. The protein operates within carbohydrate degradation; glycolysis; pyruvate from D-glyceraldehyde 3-phosphate: step 2/5. In Renibacterium salmoninarum (strain ATCC 33209 / DSM 20767 / JCM 11484 / NBRC 15589 / NCIMB 2235), this protein is Phosphoglycerate kinase.